We begin with the raw amino-acid sequence, 132 residues long: U11/U12 small nuclear ribonucleoprotein 25 kDa protein (132 aa).

In terms of domain architecture, Ubiquitin-like spans 41–132 (MTVRVCKMDG…VSFIKKLRQK (92 aa)).

As to quaternary structure, component of the U11/U12 snRNPs that are part of the U12-type spliceosome.

It is found in the nucleus. This Homo sapiens (Human) protein is U11/U12 small nuclear ribonucleoprotein 25 kDa protein (SNRNP25).